Consider the following 287-residue polypeptide: 1-acyl-sn-glycerol-3-phosphate acyltransferase alpha (287 aa).

The signal sequence occupies residues 1–26; that stretch reads MELWPGAGTLLLLLFLLLLLLLPTLW. At 27–37 the chain is on the lumenal side; it reads FCSPSAKYFFK. Residues 38–58 form a helical membrane-spanning segment; it reads MAFYNGWILFLAVLAIPVCAV. The Cytoplasmic segment spans residues 59–127; that stretch reads RGRNVENMKI…PGHCVPIAKR (69 aa). Residues 104–109 carry the HXXXXD motif motif; that stretch reads HQSSLD. The chain crosses the membrane as a helical span at residues 128-148; that stretch reads ELLWAGSAGLACWLAGVIFID. Topologically, residues 149–192 are lumenal; it reads RKRTGDAISVMSEVAQTLLTQDVRVWVFPEGTRNHNGSMLPFKR. The EGTR motif motif lies at 178–181; that stretch reads EGTR.

This sequence belongs to the 1-acyl-sn-glycerol-3-phosphate acyltransferase family.

The protein resides in the endoplasmic reticulum membrane. It catalyses the reaction a 1-acyl-sn-glycero-3-phosphate + an acyl-CoA = a 1,2-diacyl-sn-glycero-3-phosphate + CoA. It carries out the reaction 1-(9Z-octadecenoyl)-sn-glycero-3-phosphate + (9Z)-octadecenoyl-CoA = 1,2-di-(9Z-octadecenoyl)-sn-glycero-3-phosphate + CoA. The catalysed reaction is 1-(9Z-octadecenoyl)-sn-glycero-3-phosphate + hexadecanoyl-CoA = 1-(9Z)-octadecenoyl-2-hexadecanoyl-sn-glycero-3-phosphate + CoA. The enzyme catalyses heptadecanoyl-CoA + 1-(9Z-octadecenoyl)-sn-glycero-3-phosphate = 1-(9Z)-octadecenoyl-2-heptadecanoyl-sn-glycero-3-phosphate + CoA. It catalyses the reaction 1-(9Z-octadecenoyl)-sn-glycero-3-phosphate + octadecanoyl-CoA = 1-(9Z-octadecenoyl)-2-octadecanoyl-sn-glycero-3-phosphate + CoA. It carries out the reaction 1-(9Z-octadecenoyl)-sn-glycero-3-phosphate + (9Z,12Z)-octadecadienoyl-CoA = 1-(9Z)-octadecenoyl-2-(9Z,12Z)-octadecadienoyl-sn-glycero-3-phosphate + CoA. The catalysed reaction is 1-(9Z-octadecenoyl)-sn-glycero-3-phosphate + tetradecanoyl-CoA = 1-(9Z)-octadecenoyl-2-tetradecanoyl-sn-glycero-3-phosphate + CoA. The enzyme catalyses pentadecanoyl-CoA + 1-(9Z-octadecenoyl)-sn-glycero-3-phosphate = 1-(9Z)-octadecenoyl-2-pentadecanoyl-sn-glycero-3-phosphate + CoA. It catalyses the reaction 1-hexadecanoyl-sn-glycero-3-phosphate + (9Z)-octadecenoyl-CoA = 1-hexadecanoyl-2-(9Z-octadecenoyl)-sn-glycero-3-phosphate + CoA. It carries out the reaction 1-(9Z,12Z,15Z)-octadecatrienoyl-sn-glycero-3-phosphate + (9Z)-octadecenoyl-CoA = 1-(9Z,12Z,15Z)-octadecatrienoyl-2-(9Z)-octadecenoyl-sn-glycero-3-phosphate + CoA. The catalysed reaction is 1-(6Z,9Z,12Z-octadecatrienoyl)-sn-glycero-3-phosphate + (9Z)-octadecenoyl-CoA = (6Z,9Z,12Z)-octadecatrienoyl-2-(9Z)-octadecenoyl-sn-glycero-3-phosphate + CoA. The enzyme catalyses 1-eicosanoyl-sn-glycero-3-phosphate + (9Z)-octadecenoyl-CoA = 1-eicosanoyl-2-(9Z)-octadecenoyl-sn-glycero-3-phosphate + CoA. It catalyses the reaction 1-tetradecanoyl-sn-glycerol 3-phosphate + (9Z)-octadecenoyl-CoA = 1-tetradecanoyl-2-(9Z)-octadecenoyl-sn-glycero-3-phosphate + CoA. It carries out the reaction 1-(9Z-octadecenoyl)-sn-glycero-3-phosphate + (5Z,8Z,11Z,14Z)-eicosatetraenoyl-CoA = 1-(9Z)-octadecenoyl-2-(5Z,8Z,11Z,14Z)-eicosatetraenoyl-sn-glycero-3-phosphate + CoA. The catalysed reaction is 1-(9Z-octadecenoyl)-sn-glycero-3-phosphate + dodecanoyl-CoA = 1-(9Z)-octadecenoyl-2-dodecanoyl-sn-glycero-3-phosphate + CoA. The enzyme catalyses (6Z)-octadecenoyl-CoA + 1-(9Z-octadecenoyl)-sn-glycero-3-phosphate = 1-(9Z)-octadecenoyl-2-(6Z)-octadecenoyl-sn-glycero-3-phosphate + CoA. It catalyses the reaction (11Z)-octadecenoyl-CoA + 1-(9Z-octadecenoyl)-sn-glycero-3-phosphate = 1-(9Z)-octadecenoyl-2-(11Z)-octadecenoyl-sn-glycero-3-phosphate + CoA. It carries out the reaction (9Z)-hexadecenoyl-CoA + 1-(9Z-octadecenoyl)-sn-glycero-3-phosphate = 1-(9Z-octadecenoyl)-2-(9Z-hexadecenoyl)-sn-glycero-3-phosphate + CoA. It participates in phospholipid metabolism; CDP-diacylglycerol biosynthesis; CDP-diacylglycerol from sn-glycerol 3-phosphate: step 2/3. In terms of biological role, converts 1-acyl-sn-glycerol-3-phosphate (lysophosphatidic acid or LPA) into 1,2-diacyl-sn-glycerol-3-phosphate (phosphatidic acid or PA) by incorporating an acyl moiety at the sn-2 position of the glycerol backbone. The chain is 1-acyl-sn-glycerol-3-phosphate acyltransferase alpha (AGPAT1) from Ovis aries (Sheep).